Reading from the N-terminus, the 548-residue chain is Polynucleotide 5'-hydroxyl-kinase nol-9 (548 aa).

Residue 186–193 (GHKGAGKS) participates in ATP binding.

Belongs to the Clp1 family. NOL9/GRC3 subfamily.

The protein localises to the nucleus. The protein resides in the nucleolus. Functionally, polynucleotide 5'-kinase involved in rRNA processing. The polypeptide is Polynucleotide 5'-hydroxyl-kinase nol-9 (nol-9) (Caenorhabditis briggsae).